The primary structure comprises 115 residues: MRLNHKQGTAGEDAALAFLQSQGCTLLARNWHCAYGEIDLIVKNGGMILFVEVKYRKNQRFGGAAYSISPSKLLKLQRSVEYYLQQNRLTNVPCRLDAVLIEGNRPPEWIKNITG.

This sequence belongs to the UPF0102 family.

The polypeptide is UPF0102 protein NGO_1987 (Neisseria gonorrhoeae (strain ATCC 700825 / FA 1090)).